Reading from the N-terminus, the 1106-residue chain is Exportin-T (1106 aa).

The segment at 336–357 is disordered; that stretch reads TPLESRTRTGPSAQNGQSDTSD. Positions 343-357 are enriched in polar residues; the sequence is RTGPSAQNGQSDTSD.

This sequence belongs to the exportin family.

It localises to the nucleus. It is found in the cytoplasm. Its function is as follows. tRNA nucleus export receptor which facilitates tRNA translocation across the nuclear pore complex. Involved in pre-tRNA splicing, probably by affecting the interaction of pre-tRNA with splicing endonuclease. In Mycosarcoma maydis (Corn smut fungus), this protein is Exportin-T (LOS1).